A 415-amino-acid polypeptide reads, in one-letter code: MAASTSHLRSLCSSTRSLSRSGVIVTPIACRGYATTDPSPSATTPTPVRRRTTFKDKLNAGPSFSDFVSNGNDNAPLDPSEAYALKTALVGPAGRKKEMTRLPSWLKTPIPDSKNYQRLKKDLRGLNLHTVCEEARCPNISDCWGGSDKSSATATIMLMGDTCTRGCRFCSVKTSRAPPPLDPHEPENTAEAISRWGLGYVVLTSVDRDDLVDGGARHFAETVIKIKQKAPSILVECLTGDYAGDLDMVKLVARSGLDVYAHNVETVEALTPQVRDRRANFQQSLRVLDAAKKAQPTLITKTSLMLGLGETDEQLWDALRQLRAVNVDVVTFGQYMRPTKRHMAVHEYVTPDRFELWRQRALEMGFLYCASGPLVRSSYKAGEAFIENVLKKRRAASGGAETIGERPVAVDEASR.

Residues 1 to 33 (MAASTSHLRSLCSSTRSLSRSGVIVTPIACRGY) constitute a mitochondrion transit peptide. 7 residues coordinate [4Fe-4S] cluster: C132, C137, C143, C163, C167, C170, and S378. One can recognise a Radical SAM core domain in the interval 148-367 (DKSSATATIM…RQRALEMGFL (220 aa)).

This sequence belongs to the radical SAM superfamily. Lipoyl synthase family. It depends on [4Fe-4S] cluster as a cofactor.

The protein resides in the mitochondrion. The enzyme catalyses [[Fe-S] cluster scaffold protein carrying a second [4Fe-4S](2+) cluster] + N(6)-octanoyl-L-lysyl-[protein] + 2 oxidized [2Fe-2S]-[ferredoxin] + 2 S-adenosyl-L-methionine + 4 H(+) = [[Fe-S] cluster scaffold protein] + N(6)-[(R)-dihydrolipoyl]-L-lysyl-[protein] + 4 Fe(3+) + 2 hydrogen sulfide + 2 5'-deoxyadenosine + 2 L-methionine + 2 reduced [2Fe-2S]-[ferredoxin]. It functions in the pathway protein modification; protein lipoylation via endogenous pathway; protein N(6)-(lipoyl)lysine from octanoyl-[acyl-carrier-protein]: step 2/2. In terms of biological role, catalyzes the radical-mediated insertion of two sulfur atoms into the C-6 and C-8 positions of the octanoyl moiety bound to the lipoyl domains of lipoate-dependent enzymes, thereby converting the octanoylated domains into lipoylated derivatives. In Aspergillus clavatus (strain ATCC 1007 / CBS 513.65 / DSM 816 / NCTC 3887 / NRRL 1 / QM 1276 / 107), this protein is Lipoyl synthase, mitochondrial.